The following is a 145-amino-acid chain: Large ribosomal subunit protein uL13 (145 aa).

The protein belongs to the universal ribosomal protein uL13 family. In terms of assembly, part of the 50S ribosomal subunit.

Its function is as follows. This protein is one of the early assembly proteins of the 50S ribosomal subunit, although it is not seen to bind rRNA by itself. It is important during the early stages of 50S assembly. The protein is Large ribosomal subunit protein uL13 of Haloquadratum walsbyi (strain DSM 16790 / HBSQ001).